Consider the following 319-residue polypeptide: Transaldolase (319 aa).

The active-site Schiff-base intermediate with substrate is Lys126.

This sequence belongs to the transaldolase family. Type 1 subfamily. In terms of assembly, homodimer.

It is found in the cytoplasm. It catalyses the reaction D-sedoheptulose 7-phosphate + D-glyceraldehyde 3-phosphate = D-erythrose 4-phosphate + beta-D-fructose 6-phosphate. The protein operates within carbohydrate degradation; pentose phosphate pathway; D-glyceraldehyde 3-phosphate and beta-D-fructose 6-phosphate from D-ribose 5-phosphate and D-xylulose 5-phosphate (non-oxidative stage): step 2/3. In terms of biological role, transaldolase is important for the balance of metabolites in the pentose-phosphate pathway. This chain is Transaldolase, found in Bordetella petrii (strain ATCC BAA-461 / DSM 12804 / CCUG 43448).